Reading from the N-terminus, the 44-residue chain is Small, acid-soluble spore protein P (44 aa).

The tract at residues 1–44 is disordered; that stretch reads MSQTMSKNNREAKEKKGQPEPLSGSHKVKNRNHSRQKHHAHHDM. Residues 8-18 show a composition bias toward basic and acidic residues; that stretch reads NNREAKEKKGQ. A compositionally biased stretch (basic residues) spans 26-44; it reads HKVKNRNHSRQKHHAHHDM.

Belongs to the SspP family.

It localises to the spore core. The chain is Small, acid-soluble spore protein P from Bacillus cereus (strain ATCC 10987 / NRS 248).